A 118-amino-acid polypeptide reads, in one-letter code: Small ribosomal subunit protein uS13 (118 aa).

The segment at 91–118 (HRRSLPVRGQRTKTNARTRKGPRKPIKA) is disordered.

It belongs to the universal ribosomal protein uS13 family. As to quaternary structure, part of the 30S ribosomal subunit. Forms a loose heterodimer with protein S19. Forms two bridges to the 50S subunit in the 70S ribosome.

Located at the top of the head of the 30S subunit, it contacts several helices of the 16S rRNA. In the 70S ribosome it contacts the 23S rRNA (bridge B1a) and protein L5 of the 50S subunit (bridge B1b), connecting the 2 subunits; these bridges are implicated in subunit movement. Contacts the tRNAs in the A and P-sites. This Francisella philomiragia subsp. philomiragia (strain ATCC 25017 / CCUG 19701 / FSC 153 / O#319-036) protein is Small ribosomal subunit protein uS13.